The sequence spans 288 residues: Proteasome assembly chaperone 1 (288 aa).

Residue alanine 2 is modified to N-acetylalanine. The disordered stretch occupies residues 13–35 (PCRAGTEDEEEEEEGRRETPEDR). Threonine 18 is subject to Phosphothreonine. Positions 26-35 (EGRRETPEDR) are enriched in basic and acidic residues. Threonine 54 bears the Phosphothreonine mark. Serine 180 carries the post-translational modification Phosphoserine. Position 264 is an N6-acetyllysine (lysine 264).

This sequence belongs to the PSMG1 family. In terms of assembly, forms a heterodimer with PSMG2. The PSMG1-PSMG2 heterodimer interacts directly with the PSMA5 and PSMA7 proteasome alpha subunits. Degraded by the proteasome upon completion of 20S proteasome maturation. As to expression, in the adult, detected in brain, colon, leukocytes, breast and testis. Widely expressed in the fetus. Also expressed in a variety of proliferating cell lines.

The protein localises to the cytoplasm. The protein resides in the endoplasmic reticulum. Its function is as follows. Chaperone protein which promotes assembly of the 20S proteasome as part of a heterodimer with PSMG2. The PSMG1-PSMG2 heterodimer binds to the PSMA5 and PSMA7 proteasome subunits, promotes assembly of the proteasome alpha subunits into the heteroheptameric alpha ring and prevents alpha ring dimerization. This Homo sapiens (Human) protein is Proteasome assembly chaperone 1.